Reading from the N-terminus, the 492-residue chain is Solute carrier family 2, facilitated glucose transporter member 1 (492 aa).

At Met1 the chain carries N-acetylmethionine. Residues 1–11 (MEPSSKKLTGR) are Cytoplasmic-facing. The helical transmembrane segment at 12–33 (LMLAVGGAVLGSLQFGYNTGVI) threads the bilayer. At 34-66 (NAPQKVIEEFYNQTWLHRYGESISPATLTTLWS) the chain is on the extracellular side. N-linked (GlcNAc...) asparagine glycosylation occurs at Asn45. The helical transmembrane segment at 67–87 (LSVAIFSVGGMIGSFSVGLFV) threads the bilayer. The Cytoplasmic portion of the chain corresponds to 88–90 (NRF). Residues 91 to 112 (GRRNSMLMMNLLAFISAVLMGF) traverse the membrane as a helical segment. Residues 113-120 (SKLGKSFE) are Extracellular-facing. Residues 121 to 144 (MLILGRFIIGVYCGLTTGFVPMYV) traverse the membrane as a helical segment. Topologically, residues 145–155 (GEVSPTALRGA) are cytoplasmic. Residues 156-176 (LGTLHQLGIVVGILIAQVFGL) traverse the membrane as a helical segment. Gln161 is a D-glucose binding site. Residues 177–185 (DSIMGNEEL) are Extracellular-facing. A helical membrane pass occupies residues 186 to 206 (WPLLLSVIFIPALLQCVLLPF). Over 207–271 (CPESPRFLLI…LFRSAAYRQP (65 aa)) the chain is Cytoplasmic. At Ser226 the chain carries Phosphoserine. The helical transmembrane segment at 272–293 (ILIAVVLQLSQQLSGINAVFYY) threads the bilayer. Residues 282-283 (QQ) and Asn288 each bind D-glucose. Over 294-306 (STSIFEKAGVQQP) the chain is Extracellular. Residues 307–328 (VYATIGSGIVNTAFTVVSLFVV) form a helical membrane-spanning segment. Asn317 is a D-glucose binding site. The Cytoplasmic segment spans residues 329-334 (ERAGRR). A helical membrane pass occupies residues 335 to 355 (TLHLIGLAGMAGCAVLMTIAL). Over 356-365 (ALLEQLPWMS) the chain is Extracellular. Residues 366 to 388 (YLSIVAIFGFVAFFEVGPGPIPW) form a helical membrane-spanning segment. Glu380 and Trp388 together coordinate D-glucose. Topologically, residues 389-401 (FIVAELFSQGPRP) are cytoplasmic. A helical transmembrane segment spans residues 402–422 (AAIAVAGFSNWTSNFIVGMCF). At 423–429 (QYVEQLC) the chain is on the extracellular side. Residues 430 to 450 (GPYVFIIFTVLLVLFFIFTYF) traverse the membrane as a helical segment. Phosphoserine is present on Ser465. Residues 468–492 (RQGGASQSDKTPEELFHPLGADSQV) are disordered. Thr478 is subject to Phosphothreonine. Ser490 carries the post-translational modification Phosphoserine.

It belongs to the major facilitator superfamily. Sugar transporter (TC 2.A.1.1) family. Glucose transporter subfamily. Found in a complex with ADD2, DMTN and SLC2A1. Interacts (via C-terminus cytoplasmic region) with DMTN. Interacts with SNX27; the interaction is required when endocytosed to prevent degradation in lysosomes and promote recycling to the plasma membrane. Interacts with GIPC (via PDZ domain). Interacts with STOM. Interacts with SGTA (via Gln-rich region). Interacts with BSG. Interacts with SMIM43; the interaction may promote SLC2A1-mediated glucose transport to meet the energy needs of mesendoderm differentiation. In terms of processing, phosphorylation at Ser-226 by PKC promotes glucose uptake by increasing cell membrane localization.

Its subcellular location is the cell membrane. The protein localises to the photoreceptor inner segment. It carries out the reaction D-glucose(out) = D-glucose(in). Its activity is regulated as follows. The uptake of glucose is inhibited by cytochalasin B. Glucose uptake is increased in response to phorbol ester 12-O-tetradecanoylphorbol-13-acetate (TPA) treatment: TPA-induced glucose uptake requires phosphorylation at Ser-226. Functionally, facilitative glucose transporter, which is responsible for constitutive or basal glucose uptake. Has a very broad substrate specificity; can transport a wide range of aldoses including both pentoses and hexoses. Most important energy carrier of the brain: present at the blood-brain barrier and assures the energy-independent, facilitative transport of glucose into the brain. In association with BSG and NXNL1, promotes retinal cone survival by increasing glucose uptake into photoreceptors. Required for mesendoderm differentiation. This Sus scrofa (Pig) protein is Solute carrier family 2, facilitated glucose transporter member 1.